Reading from the N-terminus, the 506-residue chain is Lysine--tRNA ligase (506 aa).

Mg(2+) contacts are provided by E416 and E423.

The protein belongs to the class-II aminoacyl-tRNA synthetase family. Homodimer. Mg(2+) is required as a cofactor.

It localises to the cytoplasm. The catalysed reaction is tRNA(Lys) + L-lysine + ATP = L-lysyl-tRNA(Lys) + AMP + diphosphate. This is Lysine--tRNA ligase from Bordetella bronchiseptica (strain ATCC BAA-588 / NCTC 13252 / RB50) (Alcaligenes bronchisepticus).